A 299-amino-acid polypeptide reads, in one-letter code: Protoheme IX farnesyltransferase (299 aa).

9 helical membrane passes run valine 27–phenylalanine 47, leucine 53–isoleucine 73, phenylalanine 97–tryptophan 117, leucine 121–leucine 141, isoleucine 149–glycine 169, alanine 175–isoleucine 195, isoleucine 222–alanine 242, tyrosine 244–leucine 264, and alanine 273–leucine 293.

It belongs to the UbiA prenyltransferase family. Protoheme IX farnesyltransferase subfamily.

The protein resides in the cell inner membrane. It catalyses the reaction heme b + (2E,6E)-farnesyl diphosphate + H2O = Fe(II)-heme o + diphosphate. Its pathway is porphyrin-containing compound metabolism; heme O biosynthesis; heme O from protoheme: step 1/1. Functionally, converts heme B (protoheme IX) to heme O by substitution of the vinyl group on carbon 2 of heme B porphyrin ring with a hydroxyethyl farnesyl side group. The sequence is that of Protoheme IX farnesyltransferase from Vibrio vulnificus (strain YJ016).